Here is a 1007-residue protein sequence, read N- to C-terminus: Aldehyde reductase lnbA (1007 aa).

The interval 35–428 (QVRQSPSSIA…GRVDHQIKVR (394 aa)) is adenylation (A) domain. A Carrier domain is found at 540 to 617 (TLCQDTQTVL…ALASIIDHAK (78 aa)). Ser577 bears the O-(pantetheine 4'-phosphoryl)serine mark. The tract at residues 659 to 998 (IFITGATGFV…PTLDCSLLKK (340 aa)) is short-chain dehydrogenase/reductase (R) domain.

It belongs to the NRP synthetase family.

It carries out the reaction L-tyrosinal + AMP + diphosphate + NADP(+) = L-tyrosine + ATP + NADPH + H(+). The protein operates within secondary metabolite biosynthesis. Functionally, non-canonical nonribosomal peptide synthetase; part of the lnb gene cluster that mediates the biosynthesis of diastereomeric piperazines. Lna and lnb clusters encode sets of enzymes that produce overlapping sets of previously undescribed metabolites such as piperazinomycin-like metabolites or morpholine. The lna and lnb biosynthetic pathways appear to be part of a signaling network that controls the formation of sclerotia, a resilient overwintering structure. One primary function of the non-canonical nonribosomal peptide synthetases lnaA and lnbA consists in the reduction of L-tyrosine. The presence in the clusters of tailoring enzymes such as the oxidoreductases lnaB, lnbB, lnaE or lnbE, as well as of the cytochrome P450 monooxygenases lnaC, lnaD, or lnbC, might explain formation of various diastereomeric piperazines. The polypeptide is Aldehyde reductase lnbA (Aspergillus flavus (strain ATCC 200026 / FGSC A1120 / IAM 13836 / NRRL 3357 / JCM 12722 / SRRC 167)).